The sequence spans 739 residues: uncharacterized protein (739 aa).

8 helical membrane passes run 53–73 (LALG…ALTV), 90–110 (WHLF…AAIP), 114–134 (LMFI…GTFM), 178–198 (TYIL…QLGL), 421–441 (LIWI…VCIV), 457–477 (AFLR…LALM), 491–511 (GLAM…LPAV), and 532–552 (IVYF…SWMY).

This sequence belongs to the aromatic acid exporter ArAE (TC 2.A.85) family.

Its subcellular location is the cell membrane. This is an uncharacterized protein from Gluconobacter oxydans (strain 621H) (Gluconobacter suboxydans).